The sequence spans 611 residues: Beta-hexosaminidase (611 aa).

It belongs to the glycosyl hydrolase 20 family. As to quaternary structure, homodimer.

The protein resides in the periplasm. The enzyme catalyses Hydrolysis of terminal non-reducing N-acetyl-D-hexosamine residues in N-acetyl-beta-D-hexosaminides.. It participates in glycan degradation; chitin degradation. Inhibited by mercuric ions, PNP-beta-Glc, PNP-beta-Gal, PNP-alpha-GlcNAc, and PNP-beta-S-GlcNAc. Its function is as follows. Hydrolyzes aryl-N-acetyl-beta-D-glucosaminide (aryl-beta-GlcNAc), aryl-beta-GalNAc and chitin oligosaccharides. Can hydrolyze rapidly the artificial substrates p-nitrophenyl-N-acetyl-beta-D-glucosaminide (PNP-beta-GlcNAc) and 4-methylumbelliferyl-beta-GlcNAc, and is slightly active on p-nitrophenyl-beta-GalNAc. This enzyme is not processive, i.e. when it hydrolyzes (GlcNAc)n, both products, (Glc-NAc)n-1 and the terminal GlcNAc, are released before the enzyme attacks a second molecule of (GlcNAc)n or (GlcNAc)n-1. The sequence is that of Beta-hexosaminidase from Vibrio furnissii.